An 820-amino-acid polypeptide reads, in one-letter code: G-type lectin S-receptor-like serine/threonine-protein kinase At1g11300 (820 aa).

A signal peptide spans 1–26 (MRLHESSSPFVCILVLSCFFLSVSLA). A Bulb-type lectin domain is found at 27-150 (QERAFFSGKL…SSDAYLWESF (124 aa)). Residues 27 to 436 (QERAFFSGKL…SEIKTKDKRP (410 aa)) are Extracellular-facing. N-linked (GlcNAc...) asparagine glycosylation is found at Asn-37, Asn-58, Asn-87, Asn-115, Asn-123, Asn-173, Asn-211, Asn-247, Asn-256, and Asn-282. In terms of domain architecture, EGF-like; atypical spans 290 to 326 (PATECDNYRRCGEFATCNPRKNPLCSCIRGFRPRNLI). Intrachain disulfides connect Cys-294/Cys-306 and Cys-300/Cys-314. N-linked (GlcNAc...) asparagine glycans are attached at residues Asn-332 and Asn-351. The 81-residue stretch at 345–425 (CERQNNNGSA…SGLDLYIRLA (81 aa)) folds into the PAN domain. Cystine bridges form between Cys-379–Cys-400 and Cys-383–Cys-389. Asn-404 is a glycosylation site (N-linked (GlcNAc...) asparagine). A helical membrane pass occupies residues 437-457 (ILIGTILAGGIFVVAACVLLA). At 458–820 (RRIVMKKRAK…NVTITDVTGR (363 aa)) the chain is on the cytoplasmic side. The 280-residue stretch at 509-788 (FSLRNKLGQG…DIPEPKQPAF (280 aa)) folds into the Protein kinase domain. ATP contacts are provided by residues 515–523 (LGQGGFGPV) and Lys-537. Residues 598–615 (RRAKLLDWKTRFNIINGI) form a caM-binding region. Asp-634 acts as the Proton acceptor in catalysis.

The protein belongs to the protein kinase superfamily. Ser/Thr protein kinase family.

The protein localises to the cell membrane. It carries out the reaction L-seryl-[protein] + ATP = O-phospho-L-seryl-[protein] + ADP + H(+). It catalyses the reaction L-threonyl-[protein] + ATP = O-phospho-L-threonyl-[protein] + ADP + H(+). The sequence is that of G-type lectin S-receptor-like serine/threonine-protein kinase At1g11300 from Arabidopsis thaliana (Mouse-ear cress).